We begin with the raw amino-acid sequence, 61 residues long: Large ribosomal subunit protein uL30 (61 aa).

This sequence belongs to the universal ribosomal protein uL30 family. Part of the 50S ribosomal subunit.

The protein is Large ribosomal subunit protein uL30 of Chlorobium phaeovibrioides (strain DSM 265 / 1930) (Prosthecochloris vibrioformis (strain DSM 265)).